Here is a 196-residue protein sequence, read N- to C-terminus: Molybdopterin synthase catalytic subunit (196 aa).

Residues 110-111 (HR), Lys126, and 133-135 (KKE) each bind substrate. Residues 142–196 (GGIWRANRDGAVGERVDEDEEKKKPDMGPHGPILRPSRPGERGHGPVVRNHQLGS) are disordered. The segment covering 147–168 (ANRDGAVGERVDEDEEKKKPDM) has biased composition (basic and acidic residues).

It belongs to the MoaE family. MOCS2B subfamily. Heterotetramer; composed of 2 small (MOCS2A) and 2 large (MOCS2B) subunits.

It is found in the cytoplasm. The catalysed reaction is 2 [molybdopterin-synthase sulfur-carrier protein]-C-terminal-Gly-aminoethanethioate + cyclic pyranopterin phosphate + H2O = molybdopterin + 2 [molybdopterin-synthase sulfur-carrier protein]-C-terminal Gly-Gly + 2 H(+). The protein operates within cofactor biosynthesis; molybdopterin biosynthesis. Its function is as follows. Catalytic subunit of the molybdopterin synthase complex, a complex that catalyzes the conversion of precursor Z into molybdopterin. Acts by mediating the incorporation of 2 sulfur atoms from thiocarboxylated MOCS2A into precursor Z to generate a dithiolene group. This chain is Molybdopterin synthase catalytic subunit, found in Sclerotinia sclerotiorum (strain ATCC 18683 / 1980 / Ss-1) (White mold).